The chain runs to 1381 residues: DNA-directed RNA polymerase subunit beta'' (1381 aa).

Positions 220, 293, 300, and 303 each coordinate Zn(2+).

This sequence belongs to the RNA polymerase beta' chain family. RpoC2 subfamily. As to quaternary structure, in plastids the minimal PEP RNA polymerase catalytic core is composed of four subunits: alpha, beta, beta', and beta''. When a (nuclear-encoded) sigma factor is associated with the core the holoenzyme is formed, which can initiate transcription. The cofactor is Zn(2+).

The protein localises to the plastid. The protein resides in the chloroplast. It catalyses the reaction RNA(n) + a ribonucleoside 5'-triphosphate = RNA(n+1) + diphosphate. Its function is as follows. DNA-dependent RNA polymerase catalyzes the transcription of DNA into RNA using the four ribonucleoside triphosphates as substrates. The polypeptide is DNA-directed RNA polymerase subunit beta'' (Draba nemorosa (Woodland whitlowgrass)).